Consider the following 445-residue polypeptide: 3-phosphoshikimate 1-carboxyvinyltransferase (445 aa).

Residues Lys28, Ser29, and Arg33 each contribute to the 3-phosphoshikimate site. Lys28 contacts phosphoenolpyruvate. Residues Gly101 and Arg129 each coordinate phosphoenolpyruvate. Positions 175, 177, 328, and 355 each coordinate 3-phosphoshikimate. Gln177 is a phosphoenolpyruvate binding site. Asp328 (proton acceptor) is an active-site residue. Residues Arg359 and Arg402 each coordinate phosphoenolpyruvate.

It belongs to the EPSP synthase family. As to quaternary structure, monomer.

It localises to the cytoplasm. It catalyses the reaction 3-phosphoshikimate + phosphoenolpyruvate = 5-O-(1-carboxyvinyl)-3-phosphoshikimate + phosphate. It functions in the pathway metabolic intermediate biosynthesis; chorismate biosynthesis; chorismate from D-erythrose 4-phosphate and phosphoenolpyruvate: step 6/7. Its function is as follows. Catalyzes the transfer of the enolpyruvyl moiety of phosphoenolpyruvate (PEP) to the 5-hydroxyl of shikimate-3-phosphate (S3P) to produce enolpyruvyl shikimate-3-phosphate and inorganic phosphate. This Bradyrhizobium sp. (strain BTAi1 / ATCC BAA-1182) protein is 3-phosphoshikimate 1-carboxyvinyltransferase.